A 473-amino-acid chain; its full sequence is Bifunctional protein HldE (473 aa).

Positions 1–316 (MILPDFSLAR…AIAIHGQRAP (316 aa)) are ribokinase. 193 to 196 (NLSE) contributes to the ATP binding site. Aspartate 262 is a catalytic residue. The interval 342–473 (VTNGCFDLLH…TRIIEAIRNG (132 aa)) is cytidylyltransferase.

It in the N-terminal section; belongs to the carbohydrate kinase PfkB family. This sequence in the C-terminal section; belongs to the cytidylyltransferase family. As to quaternary structure, homodimer.

It carries out the reaction D-glycero-beta-D-manno-heptose 7-phosphate + ATP = D-glycero-beta-D-manno-heptose 1,7-bisphosphate + ADP + H(+). It catalyses the reaction D-glycero-beta-D-manno-heptose 1-phosphate + ATP + H(+) = ADP-D-glycero-beta-D-manno-heptose + diphosphate. Its pathway is nucleotide-sugar biosynthesis; ADP-L-glycero-beta-D-manno-heptose biosynthesis; ADP-L-glycero-beta-D-manno-heptose from D-glycero-beta-D-manno-heptose 7-phosphate: step 1/4. The protein operates within nucleotide-sugar biosynthesis; ADP-L-glycero-beta-D-manno-heptose biosynthesis; ADP-L-glycero-beta-D-manno-heptose from D-glycero-beta-D-manno-heptose 7-phosphate: step 3/4. Its function is as follows. Catalyzes the phosphorylation of D-glycero-D-manno-heptose 7-phosphate at the C-1 position to selectively form D-glycero-beta-D-manno-heptose-1,7-bisphosphate. Functionally, catalyzes the ADP transfer from ATP to D-glycero-beta-D-manno-heptose 1-phosphate, yielding ADP-D-glycero-beta-D-manno-heptose. The protein is Bifunctional protein HldE of Methylococcus capsulatus (strain ATCC 33009 / NCIMB 11132 / Bath).